A 127-amino-acid polypeptide reads, in one-letter code: MADIEELAEQLVGLTIQEANELANHLEEEYDIQPASAGVAVAADGGGGADGDAEEEEQTAFDVVLTGIGGNKIQVIKEVRSITGMGLKEAKSLVDEAPNPVSEGVSREEADDLKAQIEDAGGEVELQ.

A disordered region spans residues 93–127 (LVDEAPNPVSEGVSREEADDLKAQIEDAGGEVELQ). Residues 105 to 117 (VSREEADDLKAQI) show a composition bias toward basic and acidic residues.

Belongs to the bacterial ribosomal protein bL12 family. Homodimer. Part of the ribosomal stalk of the 50S ribosomal subunit. Forms a multimeric L10(L12)X complex, where L10 forms an elongated spine to which 2 to 4 L12 dimers bind in a sequential fashion. Binds GTP-bound translation factors.

Forms part of the ribosomal stalk which helps the ribosome interact with GTP-bound translation factors. Is thus essential for accurate translation. This is Large ribosomal subunit protein bL12 from Salinibacter ruber (strain DSM 13855 / M31).